The sequence spans 137 residues: Large ribosomal subunit protein mL61 (137 aa).

The protein belongs to the mitochondrion-specific ribosomal protein mL61 family. As to quaternary structure, component of the mitochondrial large ribosomal subunit (mt-LSU). Mature yeast 74S mitochondrial ribosomes consist of a small (37S) and a large (54S) subunit. The 37S small subunit contains a 15S ribosomal RNA (15S mt-rRNA) and 34 different proteins. The 54S large subunit contains a 21S rRNA (21S mt-rRNA) and 46 different proteins.

Its subcellular location is the mitochondrion. Component of the mitochondrial ribosome (mitoribosome), a dedicated translation machinery responsible for the synthesis of mitochondrial genome-encoded proteins, including at least some of the essential transmembrane subunits of the mitochondrial respiratory chain. The mitoribosomes are attached to the mitochondrial inner membrane and translation products are cotranslationally integrated into the membrane. mL61 is not essential in cells grown at 30 degrees Celsius but is required for mitochondrial translation in cells grown at 18 degrees Celsius. The chain is Large ribosomal subunit protein mL61 (MRP49) from Saccharomyces cerevisiae (strain ATCC 204508 / S288c) (Baker's yeast).